A 338-amino-acid polypeptide reads, in one-letter code: RNA 3'-terminal phosphate cyclase (338 aa).

ATP contacts are provided by residues Q103 and 283-287 (YLADQ). H308 (tele-AMP-histidine intermediate) is an active-site residue.

The protein belongs to the RNA 3'-terminal cyclase family. Type 1 subfamily.

The protein resides in the cytoplasm. It carries out the reaction a 3'-end 3'-phospho-ribonucleotide-RNA + ATP = a 3'-end 2',3'-cyclophospho-ribonucleotide-RNA + AMP + diphosphate. Functionally, catalyzes the conversion of 3'-phosphate to a 2',3'-cyclic phosphodiester at the end of RNA. The mechanism of action of the enzyme occurs in 3 steps: (A) adenylation of the enzyme by ATP; (B) transfer of adenylate to an RNA-N3'P to produce RNA-N3'PP5'A; (C) and attack of the adjacent 2'-hydroxyl on the 3'-phosphorus in the diester linkage to produce the cyclic end product. The biological role of this enzyme is unknown but it is likely to function in some aspects of cellular RNA processing. This Escherichia coli O17:K52:H18 (strain UMN026 / ExPEC) protein is RNA 3'-terminal phosphate cyclase.